Here is a 214-residue protein sequence, read N- to C-terminus: uncharacterized protein (214 aa).

A Response regulatory domain is found at 2–118 (KIVIADDHHV…ELVKTRQVHG (117 aa)). 4-aspartylphosphate is present on Asp53. The region spanning 142-207 (EKEKYYQLTR…QAALFAVKYN (66 aa)) is the HTH luxR-type domain. Positions 166 to 185 (NKEIAAALFISEKTVKTHVS) form a DNA-binding region, H-T-H motif.

Phosphorylated by YhcY.

It is found in the cytoplasm. In terms of biological role, member of the two-component regulatory system YhcY/YhcZ. This is an uncharacterized protein from Bacillus subtilis (strain 168).